Consider the following 137-residue polypeptide: Small ribosomal subunit protein uS9 (137 aa).

Positions 105-117 (LKVEGYLTRDPRA) are enriched in basic and acidic residues. The disordered stretch occupies residues 105-137 (LKVEGYLTRDPRAKERKKYGLRKARKAPQYSKR). Over residues 118–137 (KERKKYGLRKARKAPQYSKR) the composition is skewed to basic residues.

It belongs to the universal ribosomal protein uS9 family.

The sequence is that of Small ribosomal subunit protein uS9 from Cyanothece sp. (strain PCC 7425 / ATCC 29141).